We begin with the raw amino-acid sequence, 472 residues long: Adenosylhomocysteinase (472 aa).

The substrate site is built by T63, D138, and E198. Position 199–201 (199–201 (TTT)) interacts with NAD(+). Residues K228 and D232 each coordinate substrate. NAD(+) is bound by residues N233, 262 to 267 (GYGDVG), E285, N320, 341 to 343 (IGH), and N386.

It belongs to the adenosylhomocysteinase family. The cofactor is NAD(+).

It is found in the cytoplasm. The enzyme catalyses S-adenosyl-L-homocysteine + H2O = L-homocysteine + adenosine. Its pathway is amino-acid biosynthesis; L-homocysteine biosynthesis; L-homocysteine from S-adenosyl-L-homocysteine: step 1/1. Functionally, may play a key role in the regulation of the intracellular concentration of adenosylhomocysteine. The sequence is that of Adenosylhomocysteinase from Methylococcus capsulatus (strain ATCC 33009 / NCIMB 11132 / Bath).